Here is a 211-residue protein sequence, read N- to C-terminus: ATP phosphoribosyltransferase (211 aa).

Belongs to the ATP phosphoribosyltransferase family. Short subfamily. As to quaternary structure, heteromultimer composed of HisG and HisZ subunits.

The protein localises to the cytoplasm. The catalysed reaction is 1-(5-phospho-beta-D-ribosyl)-ATP + diphosphate = 5-phospho-alpha-D-ribose 1-diphosphate + ATP. It functions in the pathway amino-acid biosynthesis; L-histidine biosynthesis; L-histidine from 5-phospho-alpha-D-ribose 1-diphosphate: step 1/9. Catalyzes the condensation of ATP and 5-phosphoribose 1-diphosphate to form N'-(5'-phosphoribosyl)-ATP (PR-ATP). Has a crucial role in the pathway because the rate of histidine biosynthesis seems to be controlled primarily by regulation of HisG enzymatic activity. This Pseudomonas fluorescens (strain ATCC BAA-477 / NRRL B-23932 / Pf-5) protein is ATP phosphoribosyltransferase.